A 328-amino-acid polypeptide reads, in one-letter code: Probable nicotianamine synthase 6 (328 aa).

This sequence belongs to the nicotianamine synthase (NAS)-like family.

The enzyme catalyses 3 S-adenosyl-L-methionine = nicotianamine + 3 S-methyl-5'-thioadenosine + 3 H(+). Synthesizes nicotianamine, a polyamine that is the first intermediate in the synthesis of the phytosiderophores of the mugineic acid type found in gramineae which serves as a sensor for the physiological iron status within the plant, and/or might be involved in the transport of iron. The protein is Probable nicotianamine synthase 6 (NAS6) of Hordeum vulgare (Barley).